The following is a 158-amino-acid chain: Transcription elongation factor GreA (158 aa).

This sequence belongs to the GreA/GreB family.

In terms of biological role, necessary for efficient RNA polymerase transcription elongation past template-encoded arresting sites. The arresting sites in DNA have the property of trapping a certain fraction of elongating RNA polymerases that pass through, resulting in locked ternary complexes. Cleavage of the nascent transcript by cleavage factors such as GreA or GreB allows the resumption of elongation from the new 3'terminus. GreA releases sequences of 2 to 3 nucleotides. The polypeptide is Transcription elongation factor GreA (Wigglesworthia glossinidia brevipalpis).